The following is a 287-amino-acid chain: Glutamate racemase (287 aa).

Substrate contacts are provided by residues 32–33 (DS) and 64–65 (YG). The Proton donor/acceptor role is filled by Cys-96. 97–98 (NT) provides a ligand contact to substrate. Catalysis depends on Cys-208, which acts as the Proton donor/acceptor. 209 to 210 (TH) lines the substrate pocket.

It belongs to the aspartate/glutamate racemases family.

It carries out the reaction L-glutamate = D-glutamate. The protein operates within cell wall biogenesis; peptidoglycan biosynthesis. Functionally, provides the (R)-glutamate required for cell wall biosynthesis. The chain is Glutamate racemase from Photorhabdus laumondii subsp. laumondii (strain DSM 15139 / CIP 105565 / TT01) (Photorhabdus luminescens subsp. laumondii).